A 424-amino-acid polypeptide reads, in one-letter code: UPF0597 protein Shew185_3080 (424 aa).

The protein belongs to the UPF0597 family.

The protein is UPF0597 protein Shew185_3080 of Shewanella baltica (strain OS185).